Here is an 89-residue protein sequence, read N- to C-terminus: Small ribosomal subunit protein uS15 (89 aa).

This sequence belongs to the universal ribosomal protein uS15 family. In terms of assembly, part of the 30S ribosomal subunit. Forms a bridge to the 50S subunit in the 70S ribosome, contacting the 23S rRNA.

Its function is as follows. One of the primary rRNA binding proteins, it binds directly to 16S rRNA where it helps nucleate assembly of the platform of the 30S subunit by binding and bridging several RNA helices of the 16S rRNA. In terms of biological role, forms an intersubunit bridge (bridge B4) with the 23S rRNA of the 50S subunit in the ribosome. In Prochlorococcus marinus (strain MIT 9215), this protein is Small ribosomal subunit protein uS15.